The chain runs to 211 residues: Ion-translocating oxidoreductase complex subunit G (211 aa).

The chain crosses the membrane as a helical span at residues 9 to 29 (GLTLAIFACATTGLVALTQYL). An FMN phosphoryl threonine modification is found at Thr175.

The protein belongs to the RnfG family. The complex is composed of six subunits: RnfA, RnfB, RnfC, RnfD, RnfE and RnfG. Requires FMN as cofactor.

It localises to the cell inner membrane. Its function is as follows. Part of a membrane-bound complex that couples electron transfer with translocation of ions across the membrane. The protein is Ion-translocating oxidoreductase complex subunit G of Vibrio parahaemolyticus serotype O3:K6 (strain RIMD 2210633).